A 418-amino-acid chain; its full sequence is Glutamyl-tRNA reductase (418 aa).

Residues 57–60, serine 113, 118–120, and glutamine 124 contribute to the substrate site; these read TCNR and DFE. Catalysis depends on cysteine 58, which acts as the Nucleophile. 193–198 contacts NADP(+); that stretch reads GTGKIG.

It belongs to the glutamyl-tRNA reductase family. In terms of assembly, homodimer.

It carries out the reaction (S)-4-amino-5-oxopentanoate + tRNA(Glu) + NADP(+) = L-glutamyl-tRNA(Glu) + NADPH + H(+). It functions in the pathway porphyrin-containing compound metabolism; protoporphyrin-IX biosynthesis; 5-aminolevulinate from L-glutamyl-tRNA(Glu): step 1/2. In terms of biological role, catalyzes the NADPH-dependent reduction of glutamyl-tRNA(Glu) to glutamate 1-semialdehyde (GSA). This is Glutamyl-tRNA reductase from Christiangramia forsetii (strain DSM 17595 / CGMCC 1.15422 / KT0803) (Gramella forsetii).